A 236-amino-acid polypeptide reads, in one-letter code: Purine nucleoside phosphorylase DeoD-type (236 aa).

H5 contributes to the a purine D-ribonucleoside binding site. Residues G21, R25, R44, and 88–91 (RVGT) each bind phosphate. A purine D-ribonucleoside-binding positions include 180–182 (EME) and 204–205 (SD). Catalysis depends on D205, which acts as the Proton donor.

This sequence belongs to the PNP/UDP phosphorylase family. Homohexamer; trimer of homodimers.

It catalyses the reaction a purine D-ribonucleoside + phosphate = a purine nucleobase + alpha-D-ribose 1-phosphate. It carries out the reaction a purine 2'-deoxy-D-ribonucleoside + phosphate = a purine nucleobase + 2-deoxy-alpha-D-ribose 1-phosphate. Functionally, catalyzes the reversible phosphorolytic breakdown of the N-glycosidic bond in the beta-(deoxy)ribonucleoside molecules, with the formation of the corresponding free purine bases and pentose-1-phosphate. This chain is Purine nucleoside phosphorylase DeoD-type, found in Shewanella amazonensis (strain ATCC BAA-1098 / SB2B).